The chain runs to 202 residues: uncharacterized protein (202 aa).

Residues 178–202 (VCSSEDSEADRYSDYGWGGPSSPFN) are disordered.

This is an uncharacterized protein from Homo sapiens (Human).